A 610-amino-acid polypeptide reads, in one-letter code: UvrABC system protein C (610 aa).

One can recognise a GIY-YIG domain in the interval 16–94 (SQPGVYRMYD…IKLYQPRYNV (79 aa)). The UVR domain maps to 204 to 239 (DQVLTQLISRMETASQNLEFEEAARIRDQIQAVRRV).

This sequence belongs to the UvrC family. As to quaternary structure, interacts with UvrB in an incision complex.

It is found in the cytoplasm. Its function is as follows. The UvrABC repair system catalyzes the recognition and processing of DNA lesions. UvrC both incises the 5' and 3' sides of the lesion. The N-terminal half is responsible for the 3' incision and the C-terminal half is responsible for the 5' incision. The sequence is that of UvrABC system protein C from Escherichia coli (strain UTI89 / UPEC).